Consider the following 419-residue polypeptide: Argininosuccinate synthase (419 aa).

A9–S17 contacts ATP. Y87 serves as a coordination point for L-citrulline. G117 contributes to the ATP binding site. L-aspartate-binding residues include T119, N123, and D124. N123 is a binding site for L-citrulline. The L-citrulline site is built by R127, S175, S184, E260, and Y272.

This sequence belongs to the argininosuccinate synthase family. Type 1 subfamily. In terms of assembly, homotetramer.

It localises to the cytoplasm. It catalyses the reaction L-citrulline + L-aspartate + ATP = 2-(N(omega)-L-arginino)succinate + AMP + diphosphate + H(+). It functions in the pathway amino-acid biosynthesis; L-arginine biosynthesis; L-arginine from L-ornithine and carbamoyl phosphate: step 2/3. The polypeptide is Argininosuccinate synthase (Brevibacillus brevis (strain 47 / JCM 6285 / NBRC 100599)).